The primary structure comprises 182 residues: NADH-quinone oxidoreductase subunit B 1 (182 aa).

Positions 47, 48, 113, and 142 each coordinate [4Fe-4S] cluster.

It belongs to the complex I 20 kDa subunit family. In terms of assembly, NDH-1 is composed of 14 different subunits. Subunits NuoB, C, D, E, F, and G constitute the peripheral sector of the complex. Requires [4Fe-4S] cluster as cofactor.

The protein localises to the cell inner membrane. It catalyses the reaction a quinone + NADH + 5 H(+)(in) = a quinol + NAD(+) + 4 H(+)(out). In terms of biological role, NDH-1 shuttles electrons from NADH, via FMN and iron-sulfur (Fe-S) centers, to quinones in the respiratory chain. Couples the redox reaction to proton translocation (for every two electrons transferred, four hydrogen ions are translocated across the cytoplasmic membrane), and thus conserves the redox energy in a proton gradient. The chain is NADH-quinone oxidoreductase subunit B 1 from Anaeromyxobacter dehalogenans (strain 2CP-C).